A 388-amino-acid chain; its full sequence is Alanine racemase (388 aa).

Lys-44 (proton acceptor; specific for D-alanine) is an active-site residue. Residue Lys-44 is modified to N6-(pyridoxal phosphate)lysine. Arg-142 is a substrate binding site. Tyr-273 acts as the Proton acceptor; specific for L-alanine in catalysis. Met-321 lines the substrate pocket.

This sequence belongs to the alanine racemase family. Pyridoxal 5'-phosphate is required as a cofactor.

The enzyme catalyses L-alanine = D-alanine. It functions in the pathway amino-acid biosynthesis; D-alanine biosynthesis; D-alanine from L-alanine: step 1/1. In terms of biological role, catalyzes the interconversion of L-alanine and D-alanine. May also act on other amino acids. The protein is Alanine racemase (alr) of Mycobacterium ulcerans (strain Agy99).